The primary structure comprises 102 residues: Small ribosomal subunit protein uS10 (102 aa).

The protein belongs to the universal ribosomal protein uS10 family. Part of the 30S ribosomal subunit.

Functionally, involved in the binding of tRNA to the ribosomes. The chain is Small ribosomal subunit protein uS10 from Sulfurisphaera tokodaii (strain DSM 16993 / JCM 10545 / NBRC 100140 / 7) (Sulfolobus tokodaii).